A 144-amino-acid polypeptide reads, in one-letter code: Maximins 3/H2 (144 aa).

Positions 1–18 (MNFKYIVAVSFLIASAYA) are cleaved as a signal peptide. Propeptides lie at residues 19 to 43 (RSVQ…REIR) and 74 to 123 (TAEE…KEKR). Ile-143 carries the isoleucine amide modification.

It belongs to the bombinin family. Expressed by the skin glands.

It localises to the secreted. Its function is as follows. Maximin-3 shows antibacterial activity against both Gram-positive and Gram-negative bacteria. It also shows antimicrobial activity against the fungus C.albicans, but not against A.flavus nor P.uticale. It has little hemolytic activity. It possess a significant cytotoxicity against tumor cell lines. It possess a significant anti-HIV activity. It shows high spermicidal activity. In terms of biological role, maximin-H2 shows antibacterial activity against both Gram-positive and Gram-negative bacteria. It also shows antimicrobial activity against the fungus C.albicans. Shows strong hemolytic activity. The chain is Maximins 3/H2 from Bombina maxima (Giant fire-bellied toad).